The primary structure comprises 336 residues: Glycerol-3-phosphate dehydrogenase [NAD(P)+] (336 aa).

NADPH is bound by residues Ser-11, Trp-12, Arg-32, and Lys-109. 3 residues coordinate sn-glycerol 3-phosphate: Lys-109, Gly-140, and Ser-142. Ala-144 lines the NADPH pocket. The sn-glycerol 3-phosphate site is built by Lys-195, Asp-248, Ser-258, Arg-259, and Asn-260. Residue Lys-195 is the Proton acceptor of the active site. Arg-259 contributes to the NADPH binding site. NADPH is bound by residues Val-283 and Glu-285.

It belongs to the NAD-dependent glycerol-3-phosphate dehydrogenase family.

Its subcellular location is the cytoplasm. The catalysed reaction is sn-glycerol 3-phosphate + NAD(+) = dihydroxyacetone phosphate + NADH + H(+). It carries out the reaction sn-glycerol 3-phosphate + NADP(+) = dihydroxyacetone phosphate + NADPH + H(+). It functions in the pathway membrane lipid metabolism; glycerophospholipid metabolism. In terms of biological role, catalyzes the reduction of the glycolytic intermediate dihydroxyacetone phosphate (DHAP) to sn-glycerol 3-phosphate (G3P), the key precursor for phospholipid synthesis. The sequence is that of Glycerol-3-phosphate dehydrogenase [NAD(P)+] from Leuconostoc mesenteroides subsp. mesenteroides (strain ATCC 8293 / DSM 20343 / BCRC 11652 / CCM 1803 / JCM 6124 / NCDO 523 / NBRC 100496 / NCIMB 8023 / NCTC 12954 / NRRL B-1118 / 37Y).